We begin with the raw amino-acid sequence, 240 residues long: DNA repair protein RecO (240 aa).

This sequence belongs to the RecO family.

In terms of biological role, involved in DNA repair and RecF pathway recombination. The chain is DNA repair protein RecO from Actinobacillus pleuropneumoniae serotype 3 (strain JL03).